Consider the following 127-residue polypeptide: MSDGVKHINSAQEFANLLNTTQYVVADFYADWCGPCKAIAPMYAQFAKTFSIPNFLAFAKINVDSVQQVAQHYRVSAMPTFLFFKNGKQVAVNGSVMIQGADVNSLRAAAEKMGRLAKEKAAAAGSS.

Residues 2-115 (SDGVKHINSA…LRAAAEKMGR (114 aa)) enclose the Thioredoxin domain. Catalysis depends on nucleophile residues Cys-33 and Cys-36. A disulfide bridge connects residues Cys-33 and Cys-36.

Belongs to the thioredoxin family.

Participates in various redox reactions through the reversible oxidation of its active center dithiol to a disulfide and catalyzes dithiol-disulfide exchange reactions. The polypeptide is Thioredoxin (trx) (Neurospora crassa (strain ATCC 24698 / 74-OR23-1A / CBS 708.71 / DSM 1257 / FGSC 987)).